We begin with the raw amino-acid sequence, 290 residues long: tRNA (adenine(58)-N(1))-methyltransferase catalytic subunit TRMT61A (290 aa).

An N-acetylserine modification is found at Ser2. Substrate stretches follow at residues 20–22 (LGH), 35–42 (QTQTRHGV), 64–65 (GW), 85–89 (QILYS), and 110–117 (SGTGSGSV). S-adenosyl-L-methionine is bound by residues Leu87, 114–116 (SGS), Glu135, Arg140, 163–164 (DV), and Asp181. Substrate regions lie at residues 180–183 (LDIP) and 205–212 (SFSPCIEQ). Ser264 carries the post-translational modification Phosphoserine. Residue Thr279 coordinates substrate.

The protein belongs to the class I-like SAM-binding methyltransferase superfamily. TRM61 family. In terms of assembly, heterotetramer; composed of two copies of TRMT6 and two copies of TRMT61A.

The protein resides in the nucleus. It catalyses the reaction adenosine(58) in tRNA + S-adenosyl-L-methionine = N(1)-methyladenosine(58) in tRNA + S-adenosyl-L-homocysteine + H(+). The enzyme catalyses an adenosine in mRNA + S-adenosyl-L-methionine = an N(1)-methyladenosine in mRNA + S-adenosyl-L-homocysteine + H(+). Its function is as follows. Catalytic subunit of tRNA (adenine-N(1)-)-methyltransferase, which catalyzes the formation of N(1)-methyladenine at position 58 (m1A58) in initiator methionyl-tRNA. Catalytic subunit of mRNA N(1)-methyltransferase complex, which mediates methylation of adenosine residues at the N(1) position of a small subset of mRNAs: N(1) methylation takes place in tRNA T-loop-like structures of mRNAs and is only present at low stoichiometries. The chain is tRNA (adenine(58)-N(1))-methyltransferase catalytic subunit TRMT61A (Trmt61a) from Mus musculus (Mouse).